The primary structure comprises 648 residues: MVEIILPDGSSRSYDQETLTCGQIAASIGKGLAKAAIAGVVNGQKVDLDAPVPHGAQVAIITEDSPEGLEIIRHSASHLMAQAVKTLFPQAQVTIGPAIENGFYYDFDYERPFTPDDLTAIENCMRKLAKRNEKVERRVMPRDEAVAYFQAMGELYKAEIIGAIPAGEDVSLYSQGEFTDLCRGPHVPSTGKLKAFKVMKAGGAYWRGDSRNKMLQRIYGTAWATEADLKAYLTQMEEAEKRDHRRIGKDLDLFSVQEDAGGGLVFWHPRGSRIRRVIEDFWKDRHVEAGYEFLYTPHIANRQLWNTSGHTDFYSDSMFSPMEVDEQAYQIRPMNCPFHILIYKDRRHSYRELPFRWGELGTVYRYEMSGALHGLFRVRGFTQDDAHIFCTEQQIEEEIQRILDLTLDILRTYGFSDFEINLSTRPEKSVGSAAIWDKATEALRRAIVSRDLSYVVDEGGGAFYGPKIDVKITDSIGRKWQCSTVQLDFNLPERFDMGYIGEDGESHRPIMIHRALMGSLERFFGILVEHYAGWFPMWLAPVQAVVCSITDAQHAYAETVLAALKKAGLRVEIDLRNEKVGYKIREHTLKRVPYLLVVGDKEREEGTVNVRLRSGKSLGSLPIQDVVERLVEEAASRALSASEDQEEA.

The region spanning 1–62 is the TGS domain; sequence MVEIILPDGS…PHGAQVAIIT (62 aa). A catalytic region spans residues 243-536; it reads DHRRIGKDLD…LVEHYAGWFP (294 aa). Positions 336, 387, and 513 each coordinate Zn(2+).

It belongs to the class-II aminoacyl-tRNA synthetase family. As to quaternary structure, homodimer. It depends on Zn(2+) as a cofactor.

It localises to the cytoplasm. The enzyme catalyses tRNA(Thr) + L-threonine + ATP = L-threonyl-tRNA(Thr) + AMP + diphosphate + H(+). Functionally, catalyzes the attachment of threonine to tRNA(Thr) in a two-step reaction: L-threonine is first activated by ATP to form Thr-AMP and then transferred to the acceptor end of tRNA(Thr). Also edits incorrectly charged L-seryl-tRNA(Thr). This Magnetococcus marinus (strain ATCC BAA-1437 / JCM 17883 / MC-1) protein is Threonine--tRNA ligase.